The sequence spans 620 residues: Siderophore iron transporter ARN2 (620 aa).

A disordered region spans residues 1–42 (MIEVPEDNRSSQTKRKNTEKNCNELMVDEKMDDDSSPRDEMK). Residues 16-42 (KNTEKNCNELMVDEKMDDDSSPRDEMK) show a composition bias toward basic and acidic residues. Helical transmembrane passes span 71–93 (IFLFSAFICTFAYGLDSSIRGTY), 106–128 (LISTVSVIVLMISAVSQVIFGGL), 135–152 (LTLFLVSIVLYIVGTIIQ), 162–184 (AAGAVFYYVGLVGVMLQVVLMLS), 191–213 (WRLFYTLIPSWPSIITTWVSGSV), 223–245 (WSWNIAMWAFIFPLCCIPLILCM), 286–308 (VVGVLLFTAGVGCILVPLTLAGG), 318–335 (IIGPFVLGFVLVPGFIYW), 355–377 (VWAPLGIMFFICFVYQMAAGYLY), 392–414 (TRIINLYSFVTAVVAPFLGLIVT), 421–438 (SYIIFGGSLYFITMGLFY), 448–470 (GGIIAGMVIWGLSSCLFDYPTIV), 491–513 (VFRIGGAVAAAISGAIWTQSLYP), and 561–578 (VIVALVFSAPMFLLTFCV).

The protein belongs to the major facilitator superfamily.

It is found in the endosome membrane. Involved in the transport of siderophore triacestylfusarinine C and so has a role in iron homeostasis. The protein is Siderophore iron transporter ARN2 (ARN2) of Saccharomyces cerevisiae (strain ATCC 204508 / S288c) (Baker's yeast).